A 598-amino-acid polypeptide reads, in one-letter code: UvrABC system protein C (598 aa).

The 78-residue stretch at 14 to 91 (DSPGCYLHKD…IQKNMPKYNI (78 aa)) folds into the GIY-YIG domain. The UVR domain maps to 196–231 (DKIIEDLRSKMLAASKEMAFERAAEYRDLISGIATM).

The protein belongs to the UvrC family. In terms of assembly, interacts with UvrB in an incision complex.

The protein localises to the cytoplasm. The UvrABC repair system catalyzes the recognition and processing of DNA lesions. UvrC both incises the 5' and 3' sides of the lesion. The N-terminal half is responsible for the 3' incision and the C-terminal half is responsible for the 5' incision. This Streptococcus pyogenes serotype M1 protein is UvrABC system protein C.